A 384-amino-acid chain; its full sequence is MDQDAFILKEDSEVEREAPGGRESLSDVIGFLDAVLSSEPTDIGGDRSWLHNTINTPQGPGSAHRAKSEGEGEVSTPSTQDNRSGEESRVSGRTSKPEAEAHAGNLDKQNIHRAFGGRTGTNSVSQDLGDGGDSGILENPPNERGYPRSGIEDENREMAAHPDKRGEDQAEGLPEEVRGGTSLPDEGEGGASNNGRSMEPGSSHSARVTGVLVIPSPELEEAVLRRNKRRPTNSGSKPLTPATVPGTRSPPLNRYNSTGSPPGKPPSTQDEHINSGDTPAVRVKDRKPPIGTRSVSDCPANGRPIHPGLESDSTKKGHRREHIIYERDGYIVDESWCNPVCSRIRIIPRRELCVCKTCPKVCKLCRDDIQCMRPDPFCREIFRS.

Disordered stretches follow at residues 1–23 (MDQD…GGRE) and 38–318 (SEPT…KKGH). Basic and acidic residues predominate over residues 7–20 (ILKEDSEVEREAPG). Positions 50 to 59 (LHNTINTPQG) are enriched in polar residues. Position 68 is a phosphoserine; by host (Ser-68). A compositionally biased stretch (basic and acidic residues) spans 83–101 (RSGEESRVSGRTSKPEAEA). Ser-125 is subject to Phosphoserine; by host. Positions 150–168 (GIEDENREMAAHPDKRGED) are enriched in basic and acidic residues. A compositionally biased stretch (polar residues) spans 191 to 206 (ASNNGRSMEPGSSHSA). 4 positions are modified to phosphoserine; by host: Ser-192, Ser-249, Ser-257, and Ser-260. 8 residues coordinate Zn(2+): His-318, Cys-337, Cys-341, Cys-353, Cys-355, Cys-358, Cys-362, and Cys-365.

Belongs to the paramyxoviruses V protein family. In terms of assembly, interacts with host IFIH1/MDA5 and DHX58/LGP2. Interacts with host IRF3. Interacts with host RIGI regulatory protein (via CARDs domain) and host TRIM25 (via SPRY domain); these interactions prevent TRIM25-mediated ubiquitination of RIG-I and disrupts downstream RIG-I signaling.

The protein resides in the host cytoplasm. In terms of biological role, plays an essential role in the inhibition of host immune response. Prevents the establishment of cellular antiviral state by blocking interferon-alpha/beta (IFN-alpha/beta) production and signaling pathway. Interacts with host IFIH1/MDA5 and DHX58/LGP2 to inhibit the transduction pathway involved in the activation of IFN-beta promoter, thus protecting the virus against cell antiviral state. Also interacts with and inhibits host IRF3. Blocks the type I interferon signaling pathway by disrupting the RIG-I signaling pathway. The polypeptide is Protein V (P/V/C) (Sendai virus (strain Harris) (SeV)).